The sequence spans 471 residues: Acetylcholinesterase collagenic tail peptide (471 aa).

The N-terminal stretch at 1–30 (MLGILLQKATATLASGLNSSRAGMFPIALG) is a signal peptide. The PRAD stretch occupies residues 70–86 (CCLLTPPPPPMFPPPFF). 2 Collagen-like domains span residues 118-282 (GPPG…SGLP) and 293-307 (GPKGERGLPGPVGRC). 2 disordered regions span residues 140-205 (EIGE…GEKG) and 237-267 (KGVSGAPGHRGPVGRPGKRGKTGLKGDIGPP). Composition is skewed to low complexity over residues 155–164 (VRGPRGMPGS) and 242–251 (APGHRGPVGR). Tandem repeats lie at residues 388 to 413 (FCGDEIVQVENGEECDDGNRIVTDSC) and 420 to 443 (YCGDGYLQSGLEECDGKDFGYHTC). The 2 X 26 AA approximate repeats stretch occupies residues 388 to 443 (FCGDEIVQVENGEECDDGNRIVTDSCINCKQAYCGDGYLQSGLEECDGKDFGYHTC).

The protein belongs to the COLQ family. As to quaternary structure, the asymmetric form of AChE is a disulfide-bonded oligomer composed of a collagenic subunit (Q) and a variable number of asymmetric (T) catalytic subunits. The N-terminal of the collagenic subunit (Q) associates with the C-terminal of the catalytic subunit (T). In terms of tissue distribution, expressed in electric organs but not in muscle.

It is found in the synapse. Its function is as follows. Anchors the catalytic subunits of asymmetric AChE to the synaptic basal lamina. The protein is Acetylcholinesterase collagenic tail peptide of Torpedo marmorata (Marbled electric ray).